The sequence spans 466 residues: ATP-dependent protease ATPase subunit HslU (466 aa).

ATP contacts are provided by residues Ile18, 60 to 65, Asp279, Glu344, and Arg416; that span reads GVGKTE.

The protein belongs to the ClpX chaperone family. HslU subfamily. A double ring-shaped homohexamer of HslV is capped on each side by a ring-shaped HslU homohexamer. The assembly of the HslU/HslV complex is dependent on binding of ATP.

It is found in the cytoplasm. In terms of biological role, ATPase subunit of a proteasome-like degradation complex; this subunit has chaperone activity. The binding of ATP and its subsequent hydrolysis by HslU are essential for unfolding of protein substrates subsequently hydrolyzed by HslV. HslU recognizes the N-terminal part of its protein substrates and unfolds these before they are guided to HslV for hydrolysis. The sequence is that of ATP-dependent protease ATPase subunit HslU from Lactobacillus acidophilus (strain ATCC 700396 / NCK56 / N2 / NCFM).